The chain runs to 140 residues: MLDSQEIQAILPHRYPMLLIDRVLSFEPGEFAIARKNVSINEAVFQGHFPGNPVLPGVFILEAMAQTGAVALLTLDQFKGRTAFFGGVKSAKFRRVVRPGDTLEIKVTLEKLKDRIGVGKAIATVDGEKACTAELTFIIE.

H48 is a catalytic residue.

The protein belongs to the thioester dehydratase family. FabZ subfamily.

The protein localises to the cytoplasm. The enzyme catalyses a (3R)-hydroxyacyl-[ACP] = a (2E)-enoyl-[ACP] + H2O. Its function is as follows. Involved in unsaturated fatty acids biosynthesis. Catalyzes the dehydration of short chain beta-hydroxyacyl-ACPs and long chain saturated and unsaturated beta-hydroxyacyl-ACPs. The sequence is that of 3-hydroxyacyl-[acyl-carrier-protein] dehydratase FabZ from Latilactobacillus sakei subsp. sakei (strain 23K) (Lactobacillus sakei subsp. sakei).